We begin with the raw amino-acid sequence, 456 residues long: Probable glycine dehydrogenase (decarboxylating) subunit 1 (456 aa).

The protein belongs to the GcvP family. N-terminal subunit subfamily. In terms of assembly, the glycine cleavage system is composed of four proteins: P, T, L and H. In this organism, the P 'protein' is a heterodimer of two subunits.

The catalysed reaction is N(6)-[(R)-lipoyl]-L-lysyl-[glycine-cleavage complex H protein] + glycine + H(+) = N(6)-[(R)-S(8)-aminomethyldihydrolipoyl]-L-lysyl-[glycine-cleavage complex H protein] + CO2. The glycine cleavage system catalyzes the degradation of glycine. The P protein binds the alpha-amino group of glycine through its pyridoxal phosphate cofactor; CO(2) is released and the remaining methylamine moiety is then transferred to the lipoamide cofactor of the H protein. This is Probable glycine dehydrogenase (decarboxylating) subunit 1 from Legionella pneumophila (strain Paris).